A 783-amino-acid chain; its full sequence is Protein SCARECROW (783 aa).

Residues 298–387 (QPQSQDAITH…QSPPASENTA (90 aa)) form a disordered region. Composition is skewed to low complexity over residues 342-353 (PSSLPFVPVPSS) and 372-384 (ESQS…PASE). Positions 387–418 (AAAALIRTESIMRREKEELEQQKKDEEGLHLL) form a coiled coil. The 370-residue stretch at 408–777 (QKKDEEGLHL…LCLLTASAWR (370 aa)) folds into the GRAS domain. The segment at 415-478 (LHLLTLLLQC…LVNSCLGIYA (64 aa)) is leucine repeat I (LRI). A LxCxE motif motif is present at residues 422-426 (LQCAE). The VHIID stretch occupies residues 497 to 562 (FQVFNGISPF…GGPPLVRLTG (66 aa)). Positions 528-532 (VHIID) match the VHIID motif. Positions 572–604 (ATGKRLSDFAQKLGLPFEFFPVADKVGNLDPQR) are leucine repeat II (LRII). The interval 613-700 (VAVHWLQHSL…QQLLSREIRN (88 aa)) is PFYRE. The SAW stretch occupies residues 703–777 (AVGGPSRSGE…LCLLTASAWR (75 aa)).

It belongs to the GRAS family.

The protein localises to the nucleus. In terms of biological role, putative transcription factor involved in asymmetric cell division. Required for differentiation of endodermis and graviresponses. This is Protein SCARECROW (SCR) from Ipomoea nil (Japanese morning glory).